The chain runs to 508 residues: Glycerol kinase (508 aa).

Thr-14 contacts ADP. ATP is bound by residues Thr-14, Thr-15, and Ser-16. A sn-glycerol 3-phosphate-binding site is contributed by Thr-14. Arg-18 lines the ADP pocket. Sn-glycerol 3-phosphate contacts are provided by Arg-84, Glu-85, Tyr-136, and Asp-245. 5 residues coordinate glycerol: Arg-84, Glu-85, Tyr-136, Asp-245, and Gln-246. Residues Thr-267 and Gly-314 each coordinate ADP. Residues Thr-267, Gly-314, and Gln-318 each contribute to the ATP site. Residue Asn-419 coordinates ADP.

The protein belongs to the FGGY kinase family.

It carries out the reaction glycerol + ATP = sn-glycerol 3-phosphate + ADP + H(+). Its pathway is polyol metabolism; glycerol degradation via glycerol kinase pathway; sn-glycerol 3-phosphate from glycerol: step 1/1. Inhibited by fructose 1,6-bisphosphate (FBP). Key enzyme in the regulation of glycerol uptake and metabolism. Catalyzes the phosphorylation of glycerol to yield sn-glycerol 3-phosphate. This Bordetella pertussis (strain Tohama I / ATCC BAA-589 / NCTC 13251) protein is Glycerol kinase.